The following is a 402-amino-acid chain: Putative nickel insertion protein (402 aa).

The protein belongs to the LarC family.

This is Putative nickel insertion protein from Synechococcus elongatus (strain ATCC 33912 / PCC 7942 / FACHB-805) (Anacystis nidulans R2).